The following is a 431-amino-acid chain: L-lysine N6-monooxygenase MbtG (431 aa).

The first 21 residues, 1–21 (MNPTLAVLGAGAKAVAVAAKA), serve as a signal peptide directing secretion.

This sequence belongs to the lysine N(6)-hydroxylase/L-ornithine N(5)-oxygenase family. It depends on FAD as a cofactor.

It carries out the reaction L-lysine + NADPH + O2 = N(6)-hydroxy-L-lysine + NADP(+) + H2O. The protein operates within siderophore biosynthesis; mycobactin biosynthesis. Functionally, flavoprotein monooxygenase required for N-hydroxylation of the two acylated lysine residues during mycobactin assembly, thus producing the hydroxamate groups necessary for iron sequestration. Is also able, but less efficiently, to hydroxylate L-lysine (non acylated) in vitro. This is L-lysine N6-monooxygenase MbtG (mbtG) from Mycobacterium bovis (strain ATCC BAA-935 / AF2122/97).